A 359-amino-acid polypeptide reads, in one-letter code: NF-kappa-B inhibitor beta (359 aa).

2 positions are modified to phosphoserine; by RPS6KA1: Ser-19 and Ser-23. ANK repeat units lie at residues 57-86, 93-122, and 126-155; these read DGDTALHLAVIHQHEPFLDFLLGFSAGTEY, LGQTALHLAAILGEASTVEKLYAAGAGVLV, and GGHTALHLACRVRAHTCACVLLQPRPSHPR. Residues 153–194 are disordered; the sequence is HPRDASDTYLTQSQDCTPDTSHAPAAVDSQPNPENEEEPRDE. Positions 160 to 172 are enriched in polar residues; it reads TYLTQSQDCTPDT. ANK repeat units lie at residues 206 to 235, 240 to 269, and 273 to 302; these read DGHTPLHVAVIHKDAEMVRLLRDAGADLNK, CGRTPLHLAVEAQAASVLELLLKAGADPTA, and GGRTPLGSALLRPNPILARLLRAHGAPEPE. The segment at 298 to 359 is disordered; the sequence is APEPEDEDDK…KPLPDDPNPA (62 aa). Phosphoserine occurs at positions 313 and 318. A compositionally biased stretch (acidic residues) spans 318-331; the sequence is SDSDNRDEGDEYDD. The span at 344–359 shows a compositional bias: pro residues; that stretch reads PPSPASKPLPDDPNPA.

This sequence belongs to the NF-kappa-B inhibitor family. As to quaternary structure, interacts with THRB (via ligand-binding domain). Interacts with RELA and REL. Interacts with COMMD1. Interacts with inhibitor kappa B-interacting Ras-like NKIRAS1 and NKIRAS2. Post-translationally, phosphorylated by RPS6KA1; followed by degradation. Interaction with NKIRAS1 and NKIRAS2 probably prevents phosphorylation. Highly expressed in testis followed by spleen.

It localises to the cytoplasm. Its subcellular location is the nucleus. Inhibits NF-kappa-B by complexing with and trapping it in the cytoplasm. However, the unphosphorylated form resynthesized after cell stimulation is able to bind NF-kappa-B allowing its transport to the nucleus and protecting it to further NFKBIA-dependent inactivation. Association with inhibitor kappa B-interacting NKIRAS1 and NKIRAS2 prevent its phosphorylation rendering it more resistant to degradation, explaining its slower degradation. This Mus musculus (Mouse) protein is NF-kappa-B inhibitor beta (Nfkbib).